Here is a 132-residue protein sequence, read N- to C-terminus: Small ribosomal subunit protein uS8 (132 aa).

This sequence belongs to the universal ribosomal protein uS8 family. As to quaternary structure, part of the 30S ribosomal subunit. Contacts proteins S5 and S12.

Its function is as follows. One of the primary rRNA binding proteins, it binds directly to 16S rRNA central domain where it helps coordinate assembly of the platform of the 30S subunit. The polypeptide is Small ribosomal subunit protein uS8 (Alkaliphilus oremlandii (strain OhILAs) (Clostridium oremlandii (strain OhILAs))).